The chain runs to 388 residues: Na(+)/H(+) antiporter NhaA (388 aa).

Topologically, residues 1–11 (MKHLHRFFSSD) are cytoplasmic. Residues 12-31 (ASGGIILIIAAILAMMMANS) form a helical membrane-spanning segment. Topologically, residues 32–58 (GATSGWYHDFLETPVQLRVGSLEINKN) are periplasmic. The helical transmembrane segment at 59 to 80 (MLLWINDALMAVFFLLVGLEVK) threads the bilayer. Residues 81-96 (RELMQGSLASLRQAAF) lie on the Cytoplasmic side of the membrane. A helical transmembrane segment spans residues 97–116 (PVIAAIGGMIVPALLYLAFN). Over 117–122 (YADPIT) the chain is Periplasmic. The chain crosses the membrane as a helical span at residues 123–130 (REGWAIPA). The Cytoplasmic segment spans residues 131–154 (ATDIAFALGVLALLGSRVPLALKI). Residues 155–176 (FLMALAIIDDLGAIIIIALFYT) form a helical membrane-spanning segment. Residues 177-180 (NDLS) are Periplasmic-facing. A helical membrane pass occupies residues 181-200 (MASLGVAAVAIAVLAVLNLC). The Cytoplasmic segment spans residues 201 to 204 (GVRR). Residues 205-222 (TGVYILVGVVLWTAVLKS) traverse the membrane as a helical segment. Position 223 (Gly223) is a topological domain, periplasmic. A helical transmembrane segment spans residues 224 to 236 (VHATLAGVIVGFF). Residues 237-253 (IPLKEKHGRSTAKRLEH) are Cytoplasmic-facing. Residues 254–272 (VLHPWVAYLILPLFAFANA) form a helical membrane-spanning segment. At 273 to 286 (GVSLQGVTLDGLTS) the chain is on the periplasmic side. A helical transmembrane segment spans residues 287–310 (ILPLGIIAGLLIGKPLGISLFCWL). Residues 311 to 339 (ALRLKLAHLPEGTTYQQIMAVGILCGIGF) lie on the Cytoplasmic side of the membrane. The helical transmembrane segment at 340–350 (TMSIFIASLAF) threads the bilayer. Topologically, residues 351-357 (GSVDPEL) are periplasmic. Residues 358 to 380 (INWAKLGILVGSISSAVIGYSWL) form a helical membrane-spanning segment. The Cytoplasmic portion of the chain corresponds to 381–388 (RVRLRPSV).

This sequence belongs to the NhaA Na(+)/H(+) (TC 2.A.33) antiporter family.

It is found in the cell inner membrane. The catalysed reaction is Na(+)(in) + 2 H(+)(out) = Na(+)(out) + 2 H(+)(in). Na(+)/H(+) antiporter that extrudes sodium in exchange for external protons. The protein is Na(+)/H(+) antiporter NhaA of Shigella dysenteriae serotype 1 (strain Sd197).